A 922-amino-acid polypeptide reads, in one-letter code: 1,4-alpha-glucan-branching enzyme 1, chloroplastic/amyloplastic (922 aa).

The transit peptide at 1–47 (MVYTISGIRFPVLPSLHKSTLRCDRRASSHSFFLKNNSSSFSRTSLY) directs the protein to the chloroplast. Residues 83–130 (LENPDITSEDAQNLEDLTMKDGNKYNIDESTSSYREVGDEKGSVTSSS) are disordered. The segment covering 99–109 (LTMKDGNKYNI) has biased composition (basic and acidic residues). The active-site Nucleophile is the D494. The active-site Proton donor is E549. Residues 870–922 (VESEPIELSVEEAESEPIERSVEEVESETTQQSVEVESETTQQSVEVESETTQ) are disordered. The span at 897 to 922 (ETTQQSVEVESETTQQSVEVESETTQ) shows a compositional bias: low complexity.

The protein belongs to the glycosyl hydrolase 13 family. GlgB subfamily. As to quaternary structure, monomer. In terms of tissue distribution, expressed in roots, leaves, stipules, pods and flowers.

It is found in the plastid. Its subcellular location is the chloroplast. It localises to the amyloplast. The catalysed reaction is Transfers a segment of a (1-&gt;4)-alpha-D-glucan chain to a primary hydroxy group in a similar glucan chain.. The protein operates within glycan biosynthesis; starch biosynthesis. Functionally, catalyzes the formation of the alpha-1,6-glucosidic linkages in starch by scission of a 1,4-alpha-linked oligosaccharide from growing alpha-1,4-glucan chains and the subsequent attachment of the oligosaccharide to the alpha-1,6 position. May preferentially transfer short chains during branching. Responsible for the synthesis of about 75% of the amylopectin found in the starch granules of mature embryos. The polypeptide is 1,4-alpha-glucan-branching enzyme 1, chloroplastic/amyloplastic (SBEI) (Pisum sativum (Garden pea)).